We begin with the raw amino-acid sequence, 249 residues long: MAAKHVKYMACLFDMDGLLVDSETIYTKTTNLILDRYGKDPLPISVKAQMMGRPGSAAAKVVIDWSNIPMTPQQFVDEQQVIRAKFWSSLKPMPGAESLINNLSNHGIDIGLATSSNTANYNMKTAHLKHIFEKFGKNVITGDNPSIAPGRGKPFPDIWLKVLNLINESRKQRGLKALTPSQCIAFEDSIPGVKSAKAAGMHVIWVPDAAIKNLVGDQLNEIVDSQCETLPSLSEFDINKYLNINSKQA.

The protein belongs to the HAD-like hydrolase superfamily. CbbY/CbbZ/Gph/YieH family.

This is an uncharacterized protein from Schizosaccharomyces pombe (strain 972 / ATCC 24843) (Fission yeast).